We begin with the raw amino-acid sequence, 479 residues long: Proline--tRNA ligase (479 aa).

It belongs to the class-II aminoacyl-tRNA synthetase family. ProS type 3 subfamily. Homodimer.

The protein resides in the cytoplasm. It catalyses the reaction tRNA(Pro) + L-proline + ATP = L-prolyl-tRNA(Pro) + AMP + diphosphate. Catalyzes the attachment of proline to tRNA(Pro) in a two-step reaction: proline is first activated by ATP to form Pro-AMP and then transferred to the acceptor end of tRNA(Pro). This Mesomycoplasma hyopneumoniae (strain J / ATCC 25934 / NCTC 10110) (Mycoplasma hyopneumoniae) protein is Proline--tRNA ligase.